We begin with the raw amino-acid sequence, 128 residues long: UPF0325 protein YaeH (128 aa).

Belongs to the UPF0325 family.

This is UPF0325 protein YaeH from Salmonella agona (strain SL483).